A 341-amino-acid chain; its full sequence is Mitochondrial glutathione transporter SLC25A40 (341 aa).

Solcar repeat units lie at residues 14-132, 140-224, and 234-328; these read ITPS…LRDI, RAEI…VKQS, and PTFA…GKSF. 6 helical membrane-spanning segments follow: residues 20-40, 104-124, 143-163, 200-221, 236-256, and 299-319; these read MIAS…LDVV, LWSG…IYFT, IASL…ISPL, WGPT…YELV, FAIS…VTLP, and GLFA…AIMI.

It belongs to the mitochondrial carrier (TC 2.A.29) family.

The protein resides in the mitochondrion inner membrane. It carries out the reaction glutathione(in) = glutathione(out). In terms of biological role, probable mitochondrial transporter required for glutathione import into mitochondria. Glutathione, which plays key roles in oxidative metabolism, is produced exclusively in the cytosol and is imported in many organelles. Mitochondrial glutathione is required for the activity and stability of proteins containing iron-sulfur clusters. The polypeptide is Mitochondrial glutathione transporter SLC25A40 (Xenopus tropicalis (Western clawed frog)).